The chain runs to 721 residues: Phosphomethylpyrimidine synthase (721 aa).

Substrate is bound by residues Asn256, Met285, Tyr314, His350, 370-372 (SRG), 411-414 (DGMR), and Glu450. His454 contacts Zn(2+). Tyr477 contacts substrate. His518 serves as a coordination point for Zn(2+). The [4Fe-4S] cluster site is built by Cys598, Cys601, and Cys606.

This sequence belongs to the ThiC family. Homodimer. [4Fe-4S] cluster is required as a cofactor.

The enzyme catalyses 5-amino-1-(5-phospho-beta-D-ribosyl)imidazole + S-adenosyl-L-methionine = 4-amino-2-methyl-5-(phosphooxymethyl)pyrimidine + CO + 5'-deoxyadenosine + formate + L-methionine + 3 H(+). The protein operates within cofactor biosynthesis; thiamine diphosphate biosynthesis. Functionally, catalyzes the synthesis of the hydroxymethylpyrimidine phosphate (HMP-P) moiety of thiamine from aminoimidazole ribotide (AIR) in a radical S-adenosyl-L-methionine (SAM)-dependent reaction. The sequence is that of Phosphomethylpyrimidine synthase from Shewanella oneidensis (strain ATCC 700550 / JCM 31522 / CIP 106686 / LMG 19005 / NCIMB 14063 / MR-1).